The chain runs to 501 residues: MAIPMPTRQLFIDGEWREPILKKRIPIVNPATEEVIGDIPAATTEDVDVAVNAARRALSRNKGKDWAKAPGAVRAKYLRAIAAKVNERKTDLAKLEALDCGKPLDEAVWDMDDVAGCFEFYADLAEGLDAKQKAPVSLPMESFKSYVLKQPLGVVGLITPWNYPLLMAVWKVAPSLAAGCTAILKPSELASVTCLELADICREVGLPPGVLNVLTGFGSEAGAPLASHPGVDKIAFTGSFATGSKVMTAAAQLVKPVSMELGGKSPLIVFDDVDLDKAAEWALFGCFWTNGQICSATSRLLVHESIASEFIEKLVKWSKNIKISDPMEEGCRLGPVVSKGQYEKILKFISTAKSEGATILHGGSRPEHLEKGFFIEPTIITDVTTSMQIWREEVFGPVLCVKTFASEDEAIELANDSHYGLGAAVISNDTERCDRISEAFEAGIVWINCSQPCFTQAPWGGVKRSGFGRELGEWGLDNYLSVKQVTLYTSNDPWGWYKSPN.

Aspartate 99 and leucine 189 together coordinate Na(+). Residues 238 to 243 and 238 to 245 each bind NAD(+); these read GSFATG and GSFATGSK. Residue glutamate 260 is the Proton acceptor of the active site. NAD(+)-binding residues include cysteine 294 and glutamate 393. Catalysis depends on cysteine 294, which acts as the Nucleophile.

It belongs to the aldehyde dehydrogenase family. In terms of assembly, homodimer. Widely expressed.

The protein localises to the cytoplasm. It localises to the plastid. Its subcellular location is the chloroplast. The enzyme catalyses 4-aminobutanal + NAD(+) + H2O = 4-aminobutanoate + NADH + 2 H(+). It carries out the reaction 3-aminopropanal + NAD(+) + H2O = beta-alanine + NADH + 2 H(+). It catalyses the reaction 4-(trimethylamino)butanal + NAD(+) + H2O = 4-(trimethylamino)butanoate + NADH + 2 H(+). The catalysed reaction is 4-guanidinobutanal + NAD(+) + H2O = 4-guanidinobutanoate + NADH + 2 H(+). The enzyme catalyses betaine aldehyde + NAD(+) + H2O = glycine betaine + NADH + 2 H(+). The protein operates within amine and polyamine biosynthesis; betaine biosynthesis via choline pathway; betaine from betaine aldehyde: step 1/1. Its function is as follows. Dehydrogenase that catalyzes the oxidation of several aminoaldehydes. Metabolizes and detoxifies aldehyde products of polyamine degradation to non-toxic amino acids. Catalyzes the oxidation of 4-aminobutanal and 3-aminopropanal to 4-aminobutanoate and beta-alanine, respectively. Production of 4-aminobutinoate by ALDH10A8 may confer tolerance to salt stress. Catalyzes the oxidation of 4-(trimethylamino)butanal and 4-guanidinobutanal to 4-trimethylammoniobutanoate and 4-guanidinobutanoate, respectively. Involved in glycine betaine biosynthesis. Catalyzes with low efficiency the oxidation of betaine aldehyde to glycine betaine. The sequence is that of Aminoaldehyde dehydrogenase ALDH10A8, chloroplastic from Arabidopsis thaliana (Mouse-ear cress).